The following is a 342-amino-acid chain: Dihydroorotate dehydrogenase (quinone) (342 aa).

FMN is bound by residues 60–64 and threonine 84; that span reads AGLDK. Position 64 (lysine 64) interacts with substrate. 109–113 contacts substrate; the sequence is NRMGF. Positions 137 and 170 each coordinate FMN. Asparagine 170 provides a ligand contact to substrate. The Nucleophile role is filled by serine 173. Asparagine 175 serves as a coordination point for substrate. Lysine 215 and threonine 243 together coordinate FMN. Residue 244 to 245 coordinates substrate; it reads NT. FMN-binding positions include glycine 266, glycine 295, and 316–317; that span reads YS.

Belongs to the dihydroorotate dehydrogenase family. Type 2 subfamily. As to quaternary structure, monomer. Requires FMN as cofactor.

Its subcellular location is the cell membrane. It catalyses the reaction (S)-dihydroorotate + a quinone = orotate + a quinol. Its pathway is pyrimidine metabolism; UMP biosynthesis via de novo pathway; orotate from (S)-dihydroorotate (quinone route): step 1/1. Its function is as follows. Catalyzes the conversion of dihydroorotate to orotate with quinone as electron acceptor. This Nitrosomonas eutropha (strain DSM 101675 / C91 / Nm57) protein is Dihydroorotate dehydrogenase (quinone).